We begin with the raw amino-acid sequence, 67 residues long: Light-harvesting protein B-870 alpha chain (67 aa).

Position 1 is an N-formylmethionine; in strain DSM 149 and DSM 151 (M1). Topologically, residues 1-12 (MWRIWRLFDPMR) are cytoplasmic. Residues 13-33 (AMVAQAVFLLGLAVLIHLMLL) form a helical membrane-spanning segment. Residue H29 coordinates a bacteriochlorophyll. Topologically, residues 34–67 (GTNKYNWLDGAKKAPAATAVAPVPAEVTSLAQAK) are periplasmic.

The protein belongs to the antenna complex alpha subunit family. An alpha/beta heterodimer. The core complex is formed by different alpha and beta chains, binding bacteriochlorophyll molecules, and arranged most probably in tetrameric structures disposed around the reaction center. The non-pigmented gamma chains may constitute additional components. Post-translationally, the N-terminus is blocked.

It localises to the cell inner membrane. Functionally, antenna complexes are light-harvesting systems, which transfer the excitation energy to the reaction centers. This chain is Light-harvesting protein B-870 alpha chain (pufA), found in Rubrivivax gelatinosus (Rhodocyclus gelatinosus).